A 200-amino-acid chain; its full sequence is Max dimerization protein 3 (200 aa).

Disordered regions lie at residues 31-56 and 133-164; these read SILP…DNVR and RLLP…QEDL. One can recognise a bHLH domain in the interval 54–106; sequence NVRSVHNELEKHRRAQLRRCLEQLKQQVPLSMENSRHTTLSLLHRAKQHIKKL.

Efficient DNA binding requires dimerization with another bHLH protein. Binds DNA as a heterodimer with MAX. Expressed broadly throughout the CNS and the eye, starting at neurula stages.

The protein resides in the nucleus. Its function is as follows. Transcriptional repressor. Binds with MAX to form a sequence-specific DNA-binding protein complex which recognizes the core sequence 5'-CAC[GA]TG-3'. This is Max dimerization protein 3 (mxd3) from Xenopus laevis (African clawed frog).